We begin with the raw amino-acid sequence, 30 residues long: Ribonuclease pancreatic (30 aa).

Over residues 1 to 13 (KETAAAKFERQHM) the composition is skewed to basic and acidic residues. The interval 1 to 21 (KETAAAKFERQHMDPAPAAAX) is disordered. Substrate is bound by residues Lys-7 and Arg-10. The Proton acceptor role is filled by His-12.

The protein belongs to the pancreatic ribonuclease family. In terms of assembly, monomer. Interacts with and forms tight 1:1 complexes with RNH1. Dimerization of two such complexes may occur. Interaction with RNH1 inhibits this protein. Pancreas.

Its subcellular location is the secreted. It catalyses the reaction an [RNA] containing cytidine + H2O = an [RNA]-3'-cytidine-3'-phosphate + a 5'-hydroxy-ribonucleotide-3'-[RNA].. The catalysed reaction is an [RNA] containing uridine + H2O = an [RNA]-3'-uridine-3'-phosphate + a 5'-hydroxy-ribonucleotide-3'-[RNA].. Its function is as follows. Endonuclease that catalyzes the cleavage of RNA on the 3' side of pyrimidine nucleotides. Acts on single-stranded and double-stranded RNA. The chain is Ribonuclease pancreatic (RNASE1) from Odocoileus virginianus virginianus (Virginia white-tailed deer).